We begin with the raw amino-acid sequence, 146 residues long: Angiogenin (146 aa).

Residues 1-24 (MVMGLHLLFLVFILGLGLTPPTLA) form the signal peptide. The residue at position 25 (Q25) is a Pyrrolidone carboxylic acid. Residue H37 is the Proton acceptor of the active site. 3 disulfide bridges follow: C50-C105, C63-C116, and C81-C131. The Nucleolar localization signal signature appears at 55–59 (RLRNM). TRNA contacts are provided by C105 and V127. Catalysis depends on H138, which acts as the Proton donor.

It belongs to the pancreatic ribonuclease family. As to quaternary structure, homodimer. Interacts with RNH1; inhibiting ANG ribonuclease activity. Interacts with PCNA.

Its subcellular location is the secreted. It is found in the nucleus. The protein localises to the nucleolus. It localises to the cytoplasm. The protein resides in the stress granule. Its activity is regulated as follows. Has weak tRNA ribonuclease activity by itself due to partial autoinhibition by its C-terminus, which folds into a short alpha-helix that partially occludes the substrate-binding site. In absence of stress, the ribonuclease activity is inhibited by RNH1 in the cytoplasm. In response to stress, dissociates from RNH1 in the cytoplasm and associates with cytoplasmic ribosomes with vacant A-sites: ribosomes directly activate the tRNA ribonuclease activity of ANG by refolding the C-terminal alpha-helix. In response to stress, the angiogenic activity of ANG is inhibited by RNH1 in the nucleus. Its function is as follows. Secreted ribonuclease that can either promote or restrict cell proliferation of target cells, depending on the context. Endocytosed in target cells via its receptor PLXNB2 and translocates to the cytoplasm or nucleus. Under stress conditions, localizes to the cytoplasm and promotes the assembly of stress granules (SGs): specifically cleaves a subset of tRNAs within anticodon loops to produce tRNA-derived stress-induced fragments (tiRNAs), resulting in translation repression and inhibition of cell proliferation. tiRNas also prevent formation of apoptosome, thereby promoting cell survival. Preferentially cleaves RNAs between a pyrimidine and an adenosine residue, suggesting that it cleaves the anticodon loop of tRNA(Ala) (32-UUAGCAU-38) after positions 33 and 36. Cleaves a subset of tRNAs, including tRNA(Ala), tRNA(Glu), tRNA(Gly), tRNA(Lys), tRNA(Val), tRNA(His), tRNA(Asp) and tRNA(Sec). Under growth conditions and in differentiated cells, translocates to the nucleus and stimulates ribosomal RNA (rRNA) transcription, including that containing the initiation site sequences of 45S rRNA, thereby promoting cell growth and proliferation. Angiogenin induces vascularization of normal and malignant tissues via its ability to promote rRNA transcription. Involved in hematopoietic stem and progenitor cell (HSPC) growth and survival by promoting rRNA transcription in growth conditions and inhibiting translation in response to stress, respectively. Mediates the crosstalk between myeloid and intestinal epithelial cells to protect the intestinal epithelial barrier integrity: secreted by myeloid cells and promotes intestinal epithelial cells proliferation and survival. Also mediates osteoclast-endothelial cell crosstalk in growing bone: produced by osteoclasts and protects the neighboring vascular cells against senescence by promoting rRNA transcription. The sequence is that of Angiogenin (ANG) from Saguinus oedipus (Cotton-top tamarin).